Here is a 287-residue protein sequence, read N- to C-terminus: uncharacterized protein (287 aa).

GTP-binding positions include 43–50 (GKTGAGKS), 90–93 (DLPG), and 156–159 (DKAE). A G domain is found at 48 to 140 (GKSSLCNALF…TDEHFYRQVI (93 aa)).

To E.coli YkfA and YeeP.

This is an uncharacterized protein from Escherichia coli (strain K12).